The primary structure comprises 143 residues: Nucleoside diphosphate kinase 2 (143 aa).

ATP is bound by residues K11, F59, R87, T93, R104, and N114. H117 functions as the Pros-phosphohistidine intermediate in the catalytic mechanism.

Belongs to the NDK family. As to quaternary structure, homotetramer. Requires Mg(2+) as cofactor.

The protein resides in the cytoplasm. It carries out the reaction a 2'-deoxyribonucleoside 5'-diphosphate + ATP = a 2'-deoxyribonucleoside 5'-triphosphate + ADP. It catalyses the reaction a ribonucleoside 5'-diphosphate + ATP = a ribonucleoside 5'-triphosphate + ADP. Functionally, major role in the synthesis of nucleoside triphosphates other than ATP. The ATP gamma phosphate is transferred to the NDP beta phosphate via a ping-pong mechanism, using a phosphorylated active-site intermediate. The chain is Nucleoside diphosphate kinase 2 from Protochlamydia amoebophila (strain UWE25).